The sequence spans 160 residues: Ribosomal RNA large subunit methyltransferase H (160 aa).

S-adenosyl-L-methionine is bound by residues L76, G108, and 127-132 (LGKMTW).

The protein belongs to the RNA methyltransferase RlmH family. In terms of assembly, homodimer.

Its subcellular location is the cytoplasm. It catalyses the reaction pseudouridine(1915) in 23S rRNA + S-adenosyl-L-methionine = N(3)-methylpseudouridine(1915) in 23S rRNA + S-adenosyl-L-homocysteine + H(+). Specifically methylates the pseudouridine at position 1915 (m3Psi1915) in 23S rRNA. The protein is Ribosomal RNA large subunit methyltransferase H of Rhizobium leguminosarum bv. trifolii (strain WSM2304).